A 410-amino-acid polypeptide reads, in one-letter code: Cytosolic isocitrate dehydrogenase [NADP] (410 aa).

Residues 77-79 (TIT) and Arg-84 contribute to the NADP(+) site. Thr-79 serves as a coordination point for substrate. Residues 96-102 (SPNGTIR), Arg-111, and Arg-134 contribute to the substrate site. Lys-260 lines the NADP(+) pocket. Residues Asp-275 and Asp-279 each contribute to the Mn(2+) site. NADP(+)-binding positions include 310–315 (GTVTRH) and Asn-328.

The protein belongs to the isocitrate and isopropylmalate dehydrogenases family. The cofactor is Mg(2+). Mn(2+) serves as cofactor.

The protein resides in the cytoplasm. The protein localises to the cytosol. It catalyses the reaction D-threo-isocitrate + NADP(+) = 2-oxoglutarate + CO2 + NADPH. May supply 2-oxoglutarate for amino acid biosynthesis and ammonia assimilation via the glutamine synthetase/glutamate synthase (GS/GOGAT) pathway. May be involved in the production of NADPH to promote redox signaling or homeostasis in response to oxidative stress, or redox signaling linked to defense responses. The chain is Cytosolic isocitrate dehydrogenase [NADP] from Arabidopsis thaliana (Mouse-ear cress).